The following is a 1374-amino-acid chain: DNA-directed RNA polymerase subunit beta (1374 aa).

It belongs to the RNA polymerase beta chain family. The RNAP catalytic core consists of 2 alpha, 1 beta, 1 beta' and 1 omega subunit. When a sigma factor is associated with the core the holoenzyme is formed, which can initiate transcription.

It carries out the reaction RNA(n) + a ribonucleoside 5'-triphosphate = RNA(n+1) + diphosphate. Its function is as follows. DNA-dependent RNA polymerase catalyzes the transcription of DNA into RNA using the four ribonucleoside triphosphates as substrates. The protein is DNA-directed RNA polymerase subunit beta of Methylobacterium radiotolerans (strain ATCC 27329 / DSM 1819 / JCM 2831 / NBRC 15690 / NCIMB 10815 / 0-1).